The sequence spans 458 residues: Mitochondrial-processing peptidase subunit beta (458 aa).

Residues 1-41 (MYRRLASGLYQTSQRRIAQVQPKSVFVPETIVTTLPNGFRV) constitute a mitochondrion transit peptide. A Zn(2+)-binding site is contributed by histidine 73. The active-site Proton acceptor is the glutamate 76. Zn(2+) is bound by residues histidine 77 and glutamate 153.

Belongs to the peptidase M16 family. As to quaternary structure, heterodimer of mppa-1 (alpha) and mppb-1 (beta) subunits, forming the mitochondrial processing protease (MPP) in which mppa-1 is involved in substrate recognition and binding and mppb-1 is the catalytic subunit. Zn(2+) serves as cofactor.

It localises to the mitochondrion matrix. The enzyme catalyses Release of N-terminal transit peptides from precursor proteins imported into the mitochondrion, typically with Arg in position P2.. Its activity is regulated as follows. Binding to mppa-1 is required for catalytic activity. Inhibited by metal chelator ethylenediaminetetraacetic acid (EDTA). Functionally, catalytic subunit of the essential mitochondrial processing protease (MPP), which cleaves the mitochondrial sequence off newly imported precursors proteins. Preferentially, cleaves after an arginine at position P2. The chain is Mitochondrial-processing peptidase subunit beta from Caenorhabditis elegans.